We begin with the raw amino-acid sequence, 366 residues long: Protein-glutamate methylesterase/protein-glutamine glutaminase 2 (366 aa).

One can recognise a Response regulatory domain in the interval 3–119 (RLLIADDSAL…SLELDRLRPL (117 aa)). The residue at position 53 (Asp53) is a 4-aspartylphosphate. The interval 149–168 (AASSPRAKAARRGAARQRAK) is disordered. Basic residues predominate over residues 156-166 (KAARRGAARQR). Positions 171–363 (PAPGLVLIGT…AAVIEWGNAD (193 aa)) constitute a CheB-type methylesterase domain. Active-site residues include Ser181, His208, and Asp305.

The protein belongs to the CheB family. In terms of processing, phosphorylated by CheA. Phosphorylation of the N-terminal regulatory domain activates the methylesterase activity.

Its subcellular location is the cytoplasm. The catalysed reaction is [protein]-L-glutamate 5-O-methyl ester + H2O = L-glutamyl-[protein] + methanol + H(+). It catalyses the reaction L-glutaminyl-[protein] + H2O = L-glutamyl-[protein] + NH4(+). Involved in chemotaxis. Part of a chemotaxis signal transduction system that modulates chemotaxis in response to various stimuli. Catalyzes the demethylation of specific methylglutamate residues introduced into the chemoreceptors (methyl-accepting chemotaxis proteins or MCP) by CheR. Also mediates the irreversible deamidation of specific glutamine residues to glutamic acid. The chain is Protein-glutamate methylesterase/protein-glutamine glutaminase 2 from Rhodopseudomonas palustris (strain BisB18).